Here is a 511-residue protein sequence, read N- to C-terminus: uncharacterized protein (511 aa).

Positions 13-45 (IYDALNMLVYDYLLKMKYEGSAKIFFNEAGLEN) constitute a LisH domain. Residues 172–212 (PRFEEQGVPPAKMAPKQFRDEGRSGNVESPSIATNQEGSSP) are disordered. The span at 197 to 210 (NVESPSIATNQEGS) shows a compositional bias: polar residues.

This is an uncharacterized protein from Encephalitozoon cuniculi (strain GB-M1) (Microsporidian parasite).